We begin with the raw amino-acid sequence, 180 residues long: Nucleoid-associated protein At4g30620, chloroplastic (180 aa).

The transit peptide at 1–48 (MASTATNTDFFKTLLSPFSNGNAAQRSSRQNIVWLNRKQSGNNNRSLR) directs the protein to the chloroplast. The disordered stretch occupies residues 45-65 (RSLRVNGLFGGGKKDNKEDGQ). Residues 56 to 65 (GKKDNKEDGQ) are compositionally biased toward basic and acidic residues.

It belongs to the YbaB/EbfC family. Homodimer. Binds to the translation initiation factors TIF3E1.

The protein localises to the plastid. It is found in the chloroplast. In terms of biological role, binds to DNA and alters its conformation. May be involved in regulation of gene expression, nucleoid organization and DNA protection. The chain is Nucleoid-associated protein At4g30620, chloroplastic from Arabidopsis thaliana (Mouse-ear cress).